Here is a 282-residue protein sequence, read N- to C-terminus: MSALILDGKSVTKKSEEDLRSRVARLKELSNGAVPILATILVGNDPSSATYVKMKSNACTRVGMDSLKVEMSEETTTEELLAEIAKLNANPNIHGILLQHPVPPQINERQCFDSIDLSKDVDGVTCWGFGRMAMNETSYGSATPKGIIRILEAYDIQLEGKHAVVVGRSPILGKPMAMMLLNKNCTVTICHSKTVGLDKIIKTADIVVGAVGKPEFIKADWIKDDAVVIDAGYHEGGIGDIELQPLMSRVKAYTPVPGGVGPMTINTLIYQTVEACELKLAQ.

NADP(+)-binding positions include G167–S169 and S192.

Belongs to the tetrahydrofolate dehydrogenase/cyclohydrolase family. Homodimer.

The catalysed reaction is (6R)-5,10-methylene-5,6,7,8-tetrahydrofolate + NADP(+) = (6R)-5,10-methenyltetrahydrofolate + NADPH. It carries out the reaction (6R)-5,10-methenyltetrahydrofolate + H2O = (6R)-10-formyltetrahydrofolate + H(+). It functions in the pathway one-carbon metabolism; tetrahydrofolate interconversion. Functionally, catalyzes the oxidation of 5,10-methylenetetrahydrofolate to 5,10-methenyltetrahydrofolate and then the hydrolysis of 5,10-methenyltetrahydrofolate to 10-formyltetrahydrofolate. The sequence is that of Bifunctional protein FolD 1 from Colwellia psychrerythraea (strain 34H / ATCC BAA-681) (Vibrio psychroerythus).